The chain runs to 214 residues: Probable nicotinate-nucleotide adenylyltransferase (214 aa).

The protein belongs to the NadD family.

The enzyme catalyses nicotinate beta-D-ribonucleotide + ATP + H(+) = deamido-NAD(+) + diphosphate. Its pathway is cofactor biosynthesis; NAD(+) biosynthesis; deamido-NAD(+) from nicotinate D-ribonucleotide: step 1/1. Its function is as follows. Catalyzes the reversible adenylation of nicotinate mononucleotide (NaMN) to nicotinic acid adenine dinucleotide (NaAD). In Mycobacterium tuberculosis (strain ATCC 25177 / H37Ra), this protein is Probable nicotinate-nucleotide adenylyltransferase.